Here is a 461-residue protein sequence, read N- to C-terminus: O-methyltransferase CTB2 (461 aa).

An S-adenosyl-L-methionine-binding site is contributed by aspartate 288. The active-site Proton acceptor is the histidine 339.

This sequence belongs to the class I-like SAM-binding methyltransferase superfamily. Cation-independent O-methyltransferase family. COMT subfamily.

It participates in mycotoxin biosynthesis. O-methyltransferase; part of the gene cluster that mediates the biosynthesis of cercosporin, a light-activated, non-host-selective toxin. The perylenequinone chromophore of cercosporin absorbs light energy to attain an electronically-activated triplet state and produces active oxygen species such as the hydroxyl radical, superoxide, hydrogen peroxide or singlet oxygen upon reaction with oxygen molecules. These reactive oxygen species cause damage to various cellular components including lipids, proteins and nucleic acids. The first step of cercosporin biosynthesis is performed by the polyketide synthase CTB1 which catalyzes the formation of nor-toralactone. The starter unit acyltransferase (SAT) domain of CTB1 initiates polyketide extension by the selective utilization of acetyl-CoA, which is elongated to the heptaketide in the beta-ketoacyl synthase (KS) domain by successive condensations with six malonyl units introduced by the malonyl acyltransferase (MAT) domain. The product template (PT) domain catalyzes C4-C9 and C2-C11 aldol cyclizations and dehydrations to a trihydroxynaphthalene, which is thought to be delivered to the thioesterase (TE) domain for product release. The bifunctional enzyme CTB3 then methylates nor-toralactone to toralactone before conducting an unusual oxidative aromatic ring opening. The O-methyltransferase CTB2 further methylates the nascent OH-6 of the CBT3 product, blocking further oxidation at this site before the reductase CTB6 reduces the 2-oxopropyl ketone at position C7, giving naphthalene. The FAD-dependent monooxygenase CTB5 in concert with the multicopper oxidase CTB12 are responsible for homodimerization of naphthalene with CTB7 installing the dioxepine moiety, finally producing cercosporin. The fasciclin domain-containing protein CTB11 might act with CTB5 and CTB12 whereas the roles of CTB9 and CTB10 have still to be elucidated. The polypeptide is O-methyltransferase CTB2 (Cercospora nicotianae (Barn spot disease fungus)).